Consider the following 443-residue polypeptide: 3-phosphoshikimate 1-carboxyvinyltransferase (443 aa).

3-phosphoshikimate contacts are provided by lysine 24, serine 25, and arginine 29. Lysine 24 contributes to the phosphoenolpyruvate binding site. Residues glycine 96 and arginine 124 each coordinate phosphoenolpyruvate. Residues serine 168, glutamine 170, aspartate 316, and lysine 343 each coordinate 3-phosphoshikimate. Glutamine 170 contacts phosphoenolpyruvate. Residue aspartate 316 is the Proton acceptor of the active site. Arginine 347 and arginine 391 together coordinate phosphoenolpyruvate.

It belongs to the EPSP synthase family. Monomer.

The protein resides in the cytoplasm. It carries out the reaction 3-phosphoshikimate + phosphoenolpyruvate = 5-O-(1-carboxyvinyl)-3-phosphoshikimate + phosphate. The protein operates within metabolic intermediate biosynthesis; chorismate biosynthesis; chorismate from D-erythrose 4-phosphate and phosphoenolpyruvate: step 6/7. Its function is as follows. Catalyzes the transfer of the enolpyruvyl moiety of phosphoenolpyruvate (PEP) to the 5-hydroxyl of shikimate-3-phosphate (S3P) to produce enolpyruvyl shikimate-3-phosphate and inorganic phosphate. This is 3-phosphoshikimate 1-carboxyvinyltransferase from Dichelobacter nodosus (Bacteroides nodosus).